The chain runs to 361 residues: Protein RecA (361 aa).

77–84 (GPESSGKT) is an ATP binding site.

This sequence belongs to the RecA family.

It is found in the cytoplasm. In terms of biological role, can catalyze the hydrolysis of ATP in the presence of single-stranded DNA, the ATP-dependent uptake of single-stranded DNA by duplex DNA, and the ATP-dependent hybridization of homologous single-stranded DNAs. It interacts with LexA causing its activation and leading to its autocatalytic cleavage. This Brucella abortus (strain S19) protein is Protein RecA.